Consider the following 511-residue polypeptide: Early growth response protein 1 (511 aa).

Disordered regions lie at residues 133 to 169 and 291 to 312; these read ASIP…LSCS and PSRM…RPYA. Residues 137-169 show a composition bias toward low complexity; the sequence is SSTSQATHPSSSSTSSIPSSSSSSTSSASLSCS. 3 consecutive C2H2-type zinc fingers follow at residues 311-335, 341-363, and 369-391; these read YACP…IRIH, FQCR…IRTH, and FACE…TKIH. Residues 384–406 are disordered; the sequence is RKRHTKIHMRQKDKKAEKGATAA. Basic residues predominate over residues 386 to 396; the sequence is RHTKIHMRQKD.

This sequence belongs to the EGR C2H2-type zinc-finger protein family. In terms of tissue distribution, detected in muscle and brain.

It localises to the nucleus. The protein localises to the cytoplasm. Its function is as follows. Transcriptional regulator. Recognizes and binds to the DNA sequence 5'-GCG(T/G)GGGCG-3'(EGR-site) in the promoter region of target genes. Binds double-stranded target DNA, irrespective of the cytosine methylation status. Regulates the transcription of numerous target genes, and thereby plays an important role in regulating the response to growth factors, DNA damage, and ischemia. Plays a role in the regulation of cell survival, proliferation and cell death. Mediates responses to ischemia and hypoxia; regulates the expression of proteins that are involved in inflammatory processes. Plays a role in regulating the expression of circadian clock genes. Plays a role in the organization of Muller glia cells in the inner and outer plexiform layers of the retina. This chain is Early growth response protein 1 (egr1), found in Danio rerio (Zebrafish).